A 183-amino-acid chain; its full sequence is Glutathione-regulated potassium-efflux system ancillary protein KefG (183 aa).

It belongs to the NAD(P)H dehydrogenase (quinone) family. KefG subfamily. As to quaternary structure, interacts with KefB.

The protein resides in the cell inner membrane. The catalysed reaction is a quinone + NADH + H(+) = a quinol + NAD(+). The enzyme catalyses a quinone + NADPH + H(+) = a quinol + NADP(+). In terms of biological role, regulatory subunit of a potassium efflux system that confers protection against electrophiles. Required for full activity of KefB. In Serratia proteamaculans (strain 568), this protein is Glutathione-regulated potassium-efflux system ancillary protein KefG.